The following is a 94-amino-acid chain: ATP synthase subunit c (94 aa).

2 consecutive transmembrane segments (helical) span residues 15-35 (IGVGVILAAAGLGSAIGWGLI) and 58-78 (FIFAGLMESFPFIILAFAMWF).

This sequence belongs to the ATPase C chain family. In terms of assembly, F-type ATPases have 2 components, F(1) - the catalytic core - and F(0) - the membrane proton channel. F(1) has five subunits: alpha(3), beta(3), gamma(1), delta(1), epsilon(1). F(0) has three main subunits: a(1), b(2) and c(10-14). The alpha and beta chains form an alternating ring which encloses part of the gamma chain. F(1) is attached to F(0) by a central stalk formed by the gamma and epsilon chains, while a peripheral stalk is formed by the delta and b chains.

The protein resides in the cell inner membrane. Its function is as follows. F(1)F(0) ATP synthase produces ATP from ADP in the presence of a proton or sodium gradient. F-type ATPases consist of two structural domains, F(1) containing the extramembraneous catalytic core and F(0) containing the membrane proton channel, linked together by a central stalk and a peripheral stalk. During catalysis, ATP synthesis in the catalytic domain of F(1) is coupled via a rotary mechanism of the central stalk subunits to proton translocation. Functionally, key component of the F(0) channel; it plays a direct role in translocation across the membrane. A homomeric c-ring of between 10-14 subunits forms the central stalk rotor element with the F(1) delta and epsilon subunits. This chain is ATP synthase subunit c, found in Hydrogenovibrio crunogenus (strain DSM 25203 / XCL-2) (Thiomicrospira crunogena).